Here is a 343-residue protein sequence, read N- to C-terminus: Mas-related G-protein coupled receptor member F (343 aa).

Residues 1-44 (MAGNCSWEAHSTNQNKMCPGMSEALELYSRGFLTIEQIATLPPP) are Extracellular-facing. An N-linked (GlcNAc...) asparagine glycan is attached at asparagine 4. Residues 45-66 (AVTNYIFLLLCLCGLVGNGLVL) form a helical membrane-spanning segment. Residues 67 to 82 (WFFGFSIKRTPFSIYF) lie on the Cytoplasmic side of the membrane. The chain crosses the membrane as a helical span at residues 83–104 (LHLASADGIYLFSKAVIALLNM). The Extracellular portion of the chain corresponds to 105–123 (GTFLGSFPDYVRRVSRIVG). Residues 124–144 (LCTFFAGVSLLPAISIERCVS) traverse the membrane as a helical segment. Residues 145-160 (VIFPMWYWRRRPKRLS) are Cytoplasmic-facing. The helical transmembrane segment at 161-181 (AGVCALLWLLSFLVTSIHNYF) threads the bilayer. Over 182 to 198 (CMFLGHEASGTACLNMD) the chain is Extracellular. A helical membrane pass occupies residues 199–220 (ISLGILLFFLFCPLMVLPCLAL). The Cytoplasmic portion of the chain corresponds to 221-241 (ILHVECRARRRQRSAKLNHVV). Residues 242 to 263 (LAIVSVFLVSSIYLGIDWFLFW) form a helical membrane-spanning segment. Topologically, residues 264–273 (VFQIPAPFPE) are extracellular. A helical transmembrane segment spans residues 274–294 (YVTDLCICINSSAKPIVYFLA). The Cytoplasmic segment spans residues 295-343 (GRDKSQRLWEPLRVVFQRALRDGAEPGDAASSTPNTVTMEMQCPSGNAS). The disordered stretch occupies residues 318-343 (AEPGDAASSTPNTVTMEMQCPSGNAS). Residues 324–343 (ASSTPNTVTMEMQCPSGNAS) are compositionally biased toward polar residues.

It belongs to the G-protein coupled receptor 1 family. Mas subfamily. Gut, vas deferens, uterus and aorta; barely detectable in liver, kidney, lung, and salivary gland. In the brain, markedly abundant in the cerebellum.

It localises to the cell membrane. Functionally, orphan receptor. May bind to a neuropeptide and may regulate nociceptor function and/or development, including the sensation or modulation of pain. The protein is Mas-related G-protein coupled receptor member F (Mrgprf) of Rattus norvegicus (Rat).